The primary structure comprises 386 residues: Innexin inx4 (386 aa).

At 1-21 the chain is on the cytoplasmic side; that stretch reads MLEFVRPLQSILQIKQVNSTD. The chain crosses the membrane as a helical span at residues 22–42; sequence LVWRLHCRVTVFLLLLASLLL. The Extracellular portion of the chain corresponds to 43 to 111; sequence SARQYFGNPI…ESERSYQKYY (69 aa). Residues 112–132 traverse the membrane as a helical segment; the sequence is QWVVFILALQACMFSVPNFLW. Residues 133–187 are Cytoplasmic-facing; the sequence is KAWEAGRLQSLCDGLTTPIVPDHWEKTRKKQLITYLSADFPRLHRTYLLRYCFCT. Residues 188-208 form a helical membrane-spanning segment; that stretch reads LLNFCNVLLNIFLVNVIFSGF. The Extracellular segment spans residues 209–272; it reads WSNYHPAVKA…LNVVNEKIFA (64 aa). Residues 273-293 traverse the membrane as a helical segment; it reads FIWLWFLGLLVISMLNLLFWI. Residues 294–386 lie on the Cytoplasmic side of the membrane; it reads VVLCSKGFRL…DPEGYDEEGV (93 aa). Positions 358–386 are disordered; sequence HNGHKTFRMPKGGEPDFYTDPEGYDEEGV. A compositionally biased stretch (acidic residues) spans 374–386; that stretch reads FYTDPEGYDEEGV.

It belongs to the pannexin family.

The protein resides in the cell membrane. It localises to the cell junction. The protein localises to the gap junction. Functionally, structural component of gap junctions. Required for normal development of ovary. Required for normal egg production after blood meal. Required for normal development of testis. Its function is as follows. (Microbial infection) Modulates the development of Plasmodium falciparum oocysts. The polypeptide is Innexin inx4 (Anopheles gambiae (African malaria mosquito)).